We begin with the raw amino-acid sequence, 666 residues long: Probable potassium transport system protein Kup (666 aa).

12 helical membrane passes run 53 to 73 (FWAL…TSPL), 89 to 109 (VTPV…FIVV), 144 to 164 (LLLL…SMIT), 181 to 201 (PEFG…LFAV), 212 to 232 (AFAP…ALHI), 247 to 267 (AIHF…LVFL), 291 to 311 (WFCL…ALIL), 324 to 344 (LAPA…TVIA), 381 to 401 (IYLP…VLLF), 411 to 431 (YGIA…VVVW), 441 to 461 (AAAL…ANLL), and 463 to 483 (LLDG…LIWT).

It belongs to the HAK/KUP transporter (TC 2.A.72) family.

The protein localises to the cell inner membrane. The enzyme catalyses K(+)(in) + H(+)(in) = K(+)(out) + H(+)(out). Functionally, transport of potassium into the cell. Likely operates as a K(+):H(+) symporter. This Nitrobacter hamburgensis (strain DSM 10229 / NCIMB 13809 / X14) protein is Probable potassium transport system protein Kup.